Reading from the N-terminus, the 439-residue chain is Xylose isomerase (439 aa).

Residues His-101 and Asp-104 contribute to the active site. Glu-232, Glu-268, His-271, Asp-296, Asp-307, Asp-309, and Asp-339 together coordinate Mg(2+).

The protein belongs to the xylose isomerase family. In terms of assembly, homotetramer. It depends on Mg(2+) as a cofactor.

It localises to the cytoplasm. It carries out the reaction alpha-D-xylose = alpha-D-xylulofuranose. The chain is Xylose isomerase from Photobacterium profundum (strain SS9).